The primary structure comprises 483 residues: Probable cytosol aminopeptidase (483 aa).

Mn(2+)-binding residues include Lys-252 and Asp-257. The active site involves Lys-264. Residues Asp-275, Asp-334, and Glu-336 each contribute to the Mn(2+) site. Arg-338 is an active-site residue.

It belongs to the peptidase M17 family. Mn(2+) is required as a cofactor.

The protein localises to the cytoplasm. It carries out the reaction Release of an N-terminal amino acid, Xaa-|-Yaa-, in which Xaa is preferably Leu, but may be other amino acids including Pro although not Arg or Lys, and Yaa may be Pro. Amino acid amides and methyl esters are also readily hydrolyzed, but rates on arylamides are exceedingly low.. The enzyme catalyses Release of an N-terminal amino acid, preferentially leucine, but not glutamic or aspartic acids.. In terms of biological role, presumably involved in the processing and regular turnover of intracellular proteins. Catalyzes the removal of unsubstituted N-terminal amino acids from various peptides. The polypeptide is Probable cytosol aminopeptidase (Legionella pneumophila (strain Corby)).